The following is a 784-amino-acid chain: Toll-like receptor 2 (784 aa).

The N-terminal stretch at 1–20 (MPHTLWMVWVLGVIISLSKE) is a signal peptide. Residues 21 to 588 (ESSNQASLSC…RLSVSECHRT (568 aa)) are Extracellular-facing. Cys30 and Cys36 are oxidised to a cystine. LRR repeat units lie at residues 54-77 (VKSL…RCVN), 78-101 (LQAL…SLGS), 102-125 (LEHL…PLSS), 126-150 (LTFL…HLTK), 151-175 (LQIL…GLTF), 176-199 (LEEL…SIQN), 200-223 (VSHL…VTSS), 224-250 (VECL…TNSL), 251-278 (IKKF…QISG), 279-308 (LLEL…DPGK), 309-337 (VETL…LTER), 338-361 (VKRI…HLKS), 362-388 (LEYL…AWPS), 389-414 (LQTL…TLKN), 415-437 (LTNI…WPEK), 438-457 (MKYL…CIPK), 458-478 (TLEI…NLPQ), 479-500 (LKEL…LLPM), and 501-524 (LLVL…SFHT). N-linked (GlcNAc...) asparagine glycosylation is present at Asn114. Asn199 carries an N-linked (GlcNAc...) asparagine glycan. A disulfide bridge connects residues Cys353 and Cys382. An N-linked (GlcNAc...) asparagine glycan is attached at Asn414. Cys432 and Cys454 form a disulfide bridge. N-linked (GlcNAc...) asparagine glycosylation occurs at Asn442. Positions 525 to 579 (LKTLEAGGNNFICSCEFLSFTQEQQALAKVLIDWPANYLCDSPSHVRGQQVQDVR) constitute an LRRCT domain. A helical transmembrane segment spans residues 589–609 (ALVSGMCCALFLLILLTGVLC). Residues 610-784 (HRFHGLWYMK…WVNLRAAIKS (175 aa)) lie on the Cytoplasmic side of the membrane. One can recognise a TIR domain in the interval 639–782 (ICYDAFVSYS…GFWVNLRAAI (144 aa)). Residue Lys754 forms a Glycyl lysine isopeptide (Lys-Gly) (interchain with G-Cter in ubiquitin) linkage. Residues 761-778 (YLEWPMDEAQREGFWVNL) carry the ATG16L1-binding motif motif.

The protein belongs to the Toll-like receptor family. Interacts with LY96, TLR1 and TLR6 (via extracellular domain). TLR2 seems to exist in heterodimers with either TLR1 or TLR6 before stimulation by the ligand. The heterodimers form bigger oligomers in response to their corresponding ligands as well as further heterotypic associations with other receptors such as CD14 and/or CD36. Binds MYD88 (via TIR domain). Interacts with TICAM1. Interacts with CNPY3. Interacts with ATG16L1. Interacts with PPP1R11. Interacts with TICAM2. Interacts with TIRAP. As to quaternary structure, (Microbial infection) Interacts with M.tuberculosis EsxA. In terms of assembly, (Microbial infection) Interacts with M.bovis MPB83. (Microbial infection) Interacts with Staphylococcus aureus protein SSL5. Glycosylation of Asn-442 is critical for secretion of the N-terminal ectodomain of TLR2. In terms of processing, ubiquitinated at Lys-754 by PPP1R11, leading to its degradation. Deubiquitinated by USP2. As to expression, highly expressed in peripheral blood leukocytes, in particular in monocytes, in bone marrow, lymph node and in spleen. Also detected in lung and in fetal liver. Levels are low in other tissues.

It is found in the membrane. The protein localises to the cytoplasmic vesicle. Its subcellular location is the phagosome membrane. It localises to the membrane raft. Its function is as follows. Cooperates with LY96 to mediate the innate immune response to bacterial lipoproteins and other microbial cell wall components. Cooperates with TLR1 or TLR6 to mediate the innate immune response to bacterial lipoproteins or lipopeptides. Acts via MYD88 and TRAF6, leading to NF-kappa-B activation, cytokine secretion and the inflammatory response. May also activate immune cells and promote apoptosis in response to the lipid moiety of lipoproteins. Recognizes mycoplasmal macrophage-activating lipopeptide-2kD (MALP-2), soluble tuberculosis factor (STF), phenol-soluble modulin (PSM) and B.burgdorferi outer surface protein A lipoprotein (OspA-L) cooperatively with TLR6. Stimulation of monocytes in vitro with M.tuberculosis PstS1 induces p38 MAPK and ERK1/2 activation primarily via this receptor, but also partially via TLR4. MAPK activation in response to bacterial peptidoglycan also occurs via this receptor. Acts as a receptor for M.tuberculosis lipoproteins LprA, LprG, LpqH and PstS1, some lipoproteins are dependent on other coreceptors (TLR1, CD14 and/or CD36); the lipoproteins act as agonists to modulate antigen presenting cell functions in response to the pathogen. M.tuberculosis HSP70 (dnaK) but not HSP65 (groEL-2) acts via this protein to stimulate NF-kappa-B expression. Recognizes M.tuberculosis major T-antigen EsxA (ESAT-6) which inhibits downstream MYD88-dependent signaling (shown in mouse). Forms activation clusters composed of several receptors depending on the ligand, these clusters trigger signaling from the cell surface and subsequently are targeted to the Golgi in a lipid-raft dependent pathway. Forms the cluster TLR2:TLR6:CD14:CD36 in response to diacylated lipopeptides and TLR2:TLR1:CD14 in response to triacylated lipopeptides. Required for normal uptake of M.tuberculosis, a process that is inhibited by M.tuberculosis LppM. This is Toll-like receptor 2 from Homo sapiens (Human).